A 562-amino-acid polypeptide reads, in one-letter code: 3-(3-hydroxy-phenyl)propionate/3-hydroxycinnamic acid hydroxylase (562 aa).

Residues 8–37 (DVVI…IIEE) and 275–285 (FRKGRMLLAGD) contribute to the FAD site.

The protein belongs to the PheA/TfdB FAD monooxygenase family. Requires FAD as cofactor.

The enzyme catalyses 3-(3-hydroxyphenyl)propanoate + NADH + O2 + H(+) = 3-(2,3-dihydroxyphenyl)propanoate + NAD(+) + H2O. The catalysed reaction is (2E)-3-(3-hydroxyphenyl)prop-2-enoate + NADH + O2 + H(+) = (2E)-3-(2,3-dihydroxyphenyl)prop-2-enoate + NAD(+) + H2O. It participates in aromatic compound metabolism; 3-phenylpropanoate degradation. Functionally, catalyzes the insertion of one atom of molecular oxygen into position 2 of the phenyl ring of 3-(3-hydroxyphenyl)propionate (3-HPP) and hydroxycinnamic acid (3HCI). The protein is 3-(3-hydroxy-phenyl)propionate/3-hydroxycinnamic acid hydroxylase of Mycolicibacterium smegmatis (strain ATCC 700084 / mc(2)155) (Mycobacterium smegmatis).